A 373-amino-acid chain; its full sequence is Inhibitor of nuclear factor kappa-B kinase-interacting protein (373 aa).

The segment covering 1–11 (MSEVKSRKKPG) has biased composition (basic residues). Residues 1 to 38 (MSEVKSRKKPGPKVAAPEPEKRSDGRKNPEARGDAGWA) form a disordered region. Positions 18-33 (EPEKRSDGRKNPEARG) are enriched in basic and acidic residues. Residues 43 to 59 (GLSLLSLAMTLGLAWLV) form a helical membrane-spanning segment. Coiled coils occupy residues 86-257 (LQSK…NKLS) and 285-324 (QDLI…TLEG). The N-linked (GlcNAc...) asparagine glycan is linked to N151.

Post-translationally, N-glycosylated at Asn-151.

It localises to the endoplasmic reticulum membrane. Functionally, target of p53/TP53 with pro-apoptotic function. The protein is Inhibitor of nuclear factor kappa-B kinase-interacting protein (Ikbip) of Mus musculus (Mouse).